The primary structure comprises 252 residues: Tabinhibitin 9 (252 aa).

A signal peptide spans 1–23 (MTSNLYYVLISPYSLAYMVQYRS). The Cell attachment site signature appears at 32 to 34 (RGD). Residues 63–207 (YIRSTMCEIM…KARAFFTCNF (145 aa)) form the SCP domain.

It belongs to the CRISP family. As to expression, expressed in salivary glands.

The protein resides in the secreted. In terms of biological role, inhibits platelet aggregation induced by all agonists tested (ADP, arachidonic acid, the thromboxane A2 analog U46619, thrombin, and snake venom snaclecs (TMVA that activates platelet through GPIB, and stejnulxin that specifically acts through GPVI (GP6))). May act by competing with fibrinogen for binding to glycoprotein IIb/IIIa (ITGA2B/ITGB3). The sequence is that of Tabinhibitin 9 from Tabanus yao (Horsefly).